The sequence spans 183 residues: ATP synthase subunit b, chloroplastic (183 aa).

Residues 27–49 traverse the membrane as a helical segment; that stretch reads LATNLINLTVVVGVLIFFGKGVL.

Belongs to the ATPase B chain family. F-type ATPases have 2 components, F(1) - the catalytic core - and F(0) - the membrane proton channel. F(1) has five subunits: alpha(3), beta(3), gamma(1), delta(1), epsilon(1). F(0) has four main subunits: a(1), b(1), b'(1) and c(10-14). The alpha and beta chains form an alternating ring which encloses part of the gamma chain. F(1) is attached to F(0) by a central stalk formed by the gamma and epsilon chains, while a peripheral stalk is formed by the delta, b and b' chains.

It is found in the plastid. The protein resides in the chloroplast thylakoid membrane. F(1)F(0) ATP synthase produces ATP from ADP in the presence of a proton or sodium gradient. F-type ATPases consist of two structural domains, F(1) containing the extramembraneous catalytic core and F(0) containing the membrane proton channel, linked together by a central stalk and a peripheral stalk. During catalysis, ATP synthesis in the catalytic domain of F(1) is coupled via a rotary mechanism of the central stalk subunits to proton translocation. Functionally, component of the F(0) channel, it forms part of the peripheral stalk, linking F(1) to F(0). The chain is ATP synthase subunit b, chloroplastic from Lolium perenne (Perennial ryegrass).